The primary structure comprises 448 residues: Phosphoglucosamine mutase (448 aa).

Ser104 acts as the Phosphoserine intermediate in catalysis. Mg(2+)-binding residues include Ser104, Asp241, Asp243, and Asp245. Ser104 carries the phosphoserine modification.

It belongs to the phosphohexose mutase family. Mg(2+) is required as a cofactor. In terms of processing, activated by phosphorylation.

The catalysed reaction is alpha-D-glucosamine 1-phosphate = D-glucosamine 6-phosphate. Catalyzes the conversion of glucosamine-6-phosphate to glucosamine-1-phosphate. This chain is Phosphoglucosamine mutase, found in Nocardioides sp. (strain ATCC BAA-499 / JS614).